The following is a 156-amino-acid chain: MNLNATLFAQMVVFLVLAWFTMKFVWPPLINALDERSKKIADGLAAAEKGKAELEAAHKRVDQELAQARNDGQQRIADAEKRAQAVAEEIKANAQAEAARIVAQAKAEAEQQIVKAREALRGEVAALAVKGAEQILKREVDQTAHAQLLNQLKAEL.

Residues 7 to 29 (LFAQMVVFLVLAWFTMKFVWPPL) traverse the membrane as a helical segment.

Belongs to the ATPase B chain family. In terms of assembly, F-type ATPases have 2 components, F(1) - the catalytic core - and F(0) - the membrane proton channel. F(1) has five subunits: alpha(3), beta(3), gamma(1), delta(1), epsilon(1). F(0) has three main subunits: a(1), b(2) and c(10-14). The alpha and beta chains form an alternating ring which encloses part of the gamma chain. F(1) is attached to F(0) by a central stalk formed by the gamma and epsilon chains, while a peripheral stalk is formed by the delta and b chains.

The protein localises to the cell inner membrane. Functionally, f(1)F(0) ATP synthase produces ATP from ADP in the presence of a proton or sodium gradient. F-type ATPases consist of two structural domains, F(1) containing the extramembraneous catalytic core and F(0) containing the membrane proton channel, linked together by a central stalk and a peripheral stalk. During catalysis, ATP synthesis in the catalytic domain of F(1) is coupled via a rotary mechanism of the central stalk subunits to proton translocation. Its function is as follows. Component of the F(0) channel, it forms part of the peripheral stalk, linking F(1) to F(0). This Burkholderia multivorans (strain ATCC 17616 / 249) protein is ATP synthase subunit b.